The primary structure comprises 236 residues: Small ribosomal subunit protein uS2c (236 aa).

The protein belongs to the universal ribosomal protein uS2 family.

It is found in the plastid. The protein localises to the chloroplast. The protein is Small ribosomal subunit protein uS2c (rps2) of Helianthus annuus (Common sunflower).